Reading from the N-terminus, the 356-residue chain is Activating signal cointegrator 1 complex subunit 1 (356 aa).

The tract at residues 1–52 is required for interaction with ASCC3; the sequence is MDVLRPQIVTFDGRNYRKNPIQEKQYQHEEDEDFYPDSMEYSDEPCGAYEVA. In terms of domain architecture, KH spans 57–119; the sequence is GFRATVSAPS…NGVVSARTRI (63 aa).

Identified in the ASCC complex that contains ASCC1, ASCC2 and ASCC3. Interacts directly with ASCC3. The ASCC complex interacts with ALKBH3. Part of the ASC-1 complex, that contains TRIP4, ASCC1, ASCC2 and ASCC3. Interacts with CSRP1. Interacts with ZCCHC4. Expressed in the spinal cord, brain, paraspinal ganglia, thyroid, and submandibular glands.

It localises to the nucleus. The protein resides in the nucleus speckle. Plays a role in DNA damage repair as component of the ASCC complex. Part of the ASC-1 complex that enhances NF-kappa-B, SRF and AP1 transactivation. In cells responding to gastrin-activated paracrine signals, it is involved in the induction of SERPINB2 expression by gastrin. May also play a role in the development of neuromuscular junction. The protein is Activating signal cointegrator 1 complex subunit 1 (Ascc1) of Mus musculus (Mouse).